Reading from the N-terminus, the 323-residue chain is Fructokinase-1 (323 aa).

This sequence belongs to the carbohydrate kinase PfkB family. As to expression, expressed in root, endosperm and leaf tissues.

The enzyme catalyses D-fructose + ATP = D-fructose 6-phosphate + ADP + H(+). The protein operates within glycan biosynthesis; starch biosynthesis. Completely inhibited at 50 mM ATP, but not inhibited at high fructose concentration. Functionally, fructokinase that may play an important role in maintaining the flux of carbon towards starch formation. May also be involved in a sugar-sensing pathway. This Oryza sativa subsp. japonica (Rice) protein is Fructokinase-1.